The chain runs to 538 residues: Calcyphosin-2 (538 aa).

The span at 134–146 (RNAENTKSNVTHK) shows a compositional bias: polar residues. The disordered stretch occupies residues 134 to 154 (RNAENTKSNVTHKQSPRNKID). EF-hand domains are found at residues 426–461 (RILTGLGKYFQQLDKEGNGLLDKADFKQALKVFHLE), 462–497 (VSEKDFESAWLILNDNGNGKVDYGEFKRGIIGEMNE), and 498–533 (YRKSYVRKAFMKLDFNKSGSVPIINIRKCYCAKKHS). 12 residues coordinate Ca(2+): aspartate 439, asparagine 443, aspartate 450, asparagine 477, asparagine 479, lysine 481, glutamate 486, aspartate 511, asparagine 513, serine 515, serine 517, and asparagine 522.

As to expression, abundantly expressed in many tissues. Expressed in brain, colon, heart, kidney, liver, lung, liver, pancreas, placenta, skeletal muscle, testis and thymus. Highest expression in colon, testis, lung, placenta and brain.

This chain is Calcyphosin-2, found in Homo sapiens (Human).